The chain runs to 916 residues: Protein translocase subunit SecA (916 aa).

Residues glutamine 87, 105–109, and aspartate 507 each bind ATP; that span reads GEGKT. Residues cysteine 900, cysteine 902, cysteine 911, and histidine 912 each coordinate Zn(2+).

Belongs to the SecA family. In terms of assembly, monomer and homodimer. Part of the essential Sec protein translocation apparatus which comprises SecA, SecYEG and auxiliary proteins SecDF-YajC and YidC. Zn(2+) serves as cofactor.

It localises to the cell inner membrane. The protein resides in the cytoplasm. It carries out the reaction ATP + H2O + cellular proteinSide 1 = ADP + phosphate + cellular proteinSide 2.. Part of the Sec protein translocase complex. Interacts with the SecYEG preprotein conducting channel. Has a central role in coupling the hydrolysis of ATP to the transfer of proteins into and across the cell membrane, serving both as a receptor for the preprotein-SecB complex and as an ATP-driven molecular motor driving the stepwise translocation of polypeptide chains across the membrane. This is Protein translocase subunit SecA from Neisseria meningitidis serogroup C / serotype 2a (strain ATCC 700532 / DSM 15464 / FAM18).